A 275-amino-acid chain; its full sequence is Bis(5'-nucleosyl)-tetraphosphatase, symmetrical (275 aa).

This sequence belongs to the Ap4A hydrolase family.

It catalyses the reaction P(1),P(4)-bis(5'-adenosyl) tetraphosphate + H2O = 2 ADP + 2 H(+). Functionally, hydrolyzes diadenosine 5',5'''-P1,P4-tetraphosphate to yield ADP. This is Bis(5'-nucleosyl)-tetraphosphatase, symmetrical from Marinomonas sp. (strain MWYL1).